The chain runs to 328 residues: Flotillin-like protein FloA (328 aa).

2 consecutive transmembrane segments (helical) span residues 1–21 and 26–46; these read MFGLGIIVIAVIIVIALLVLF and VGLWISAIAAGVKVGIGTLVG.

This sequence belongs to the flotillin-like FloA family. In terms of assembly, homooligomerizes.

It is found in the cell membrane. It localises to the membrane raft. In terms of biological role, found in functional membrane microdomains (FMM) that may be equivalent to eukaryotic membrane rafts. FMMs are highly dynamic and increase in number as cells age. Flotillins are thought to be important factors in membrane fluidity. The protein is Flotillin-like protein FloA of Staphylococcus haemolyticus (strain JCSC1435).